A 430-amino-acid chain; its full sequence is Sesquiterpene synthase Agr5 (430 aa).

Positions 1 to 25 (MASSLLEPSLAAIALVILLASVSLS) are cleaved as a signal peptide. Residue N113 is glycosylated (N-linked (GlcNAc...) asparagine). The Mg(2+) site is built by D176, N311, S315, and E319. The DDXXD motif motif lies at 176–180 (DEYTD). (2E,6E)-farnesyl diphosphate is bound by residues R401 and Y402.

Belongs to the terpene synthase family. Requires Mg(2+) as cofactor.

It catalyses the reaction (2E,6E)-farnesyl diphosphate = viridiflorene + diphosphate. Terpene cyclase that catalyzes the cyclization of farnesyl diphosphate (FPP) to viridiflorene and viridiflorol. This is Sesquiterpene synthase Agr5 from Cyclocybe aegerita (Black poplar mushroom).